Reading from the N-terminus, the 282-residue chain is Probable xyloglucan endotransglucosylase/hydrolase protein 18 (282 aa).

The signal sequence occupies residues 1 to 26; the sequence is MKLSCGTSFAFLIMFLFAAQSMHVYA. In terms of domain architecture, GH16 spans 27–218; sequence GSFHKDVQIH…WSKAPFTAFY (192 aa). Catalysis depends on E104, which acts as the Nucleophile. E108 acts as the Proton donor in catalysis. E108 contacts xyloglucan. N-linked (GlcNAc...) asparagine glycosylation occurs at N112. Residues 121 to 123, 131 to 133, 197 to 198, and G202 contribute to the xyloglucan site; these read HTN, DKE, and HW. A disulfide bond links C226 and C235. N-linked (GlcNAc...) asparagine glycosylation is present at N238. A disulfide bridge connects residues C267 and C281. Residue R272 participates in xyloglucan binding.

This sequence belongs to the glycosyl hydrolase 16 family. XTH group 2 subfamily. In terms of processing, contains at least one intrachain disulfide bond essential for its enzymatic activity. In terms of tissue distribution, root specific.

Its subcellular location is the secreted. It is found in the cell wall. It localises to the extracellular space. The protein localises to the apoplast. It carries out the reaction breaks a beta-(1-&gt;4) bond in the backbone of a xyloglucan and transfers the xyloglucanyl segment on to O-4 of the non-reducing terminal glucose residue of an acceptor, which can be a xyloglucan or an oligosaccharide of xyloglucan.. Functionally, catalyzes xyloglucan endohydrolysis (XEH) and/or endotransglycosylation (XET). Cleaves and religates xyloglucan polymers, an essential constituent of the primary cell wall, and thereby participates in cell wall construction of growing tissues. The chain is Probable xyloglucan endotransglucosylase/hydrolase protein 18 (XTH18) from Arabidopsis thaliana (Mouse-ear cress).